Here is a 704-residue protein sequence, read N- to C-terminus: Elongation factor G (704 aa).

The tr-type G domain occupies 10 to 290; sequence KKVRNIGIMA…AVVDYLPSPL (281 aa). GTP-binding positions include 19–26, 83–87, and 137–140; these read AHIDAGKT, DTPGH, and NKMD.

The protein belongs to the TRAFAC class translation factor GTPase superfamily. Classic translation factor GTPase family. EF-G/EF-2 subfamily.

The protein localises to the cytoplasm. In terms of biological role, catalyzes the GTP-dependent ribosomal translocation step during translation elongation. During this step, the ribosome changes from the pre-translocational (PRE) to the post-translocational (POST) state as the newly formed A-site-bound peptidyl-tRNA and P-site-bound deacylated tRNA move to the P and E sites, respectively. Catalyzes the coordinated movement of the two tRNA molecules, the mRNA and conformational changes in the ribosome. The polypeptide is Elongation factor G (Kocuria rhizophila (strain ATCC 9341 / DSM 348 / NBRC 103217 / DC2201)).